A 168-amino-acid chain; its full sequence is Lipoprotein signal peptidase (168 aa).

A run of 3 helical transmembrane segments spans residues 6–26, 70–90, and 98–118; these read VLAALKWYGVALLVILLDQIT, WFLALLAAGVSVLLIFWIAKL, and ALALALVLGGALGNLYDRMLL. Residues aspartate 123 and aspartate 141 contribute to the active site. The chain crosses the membrane as a helical span at residues 139 to 159; sequence IADSAICIGAALLVWDSLFGT.

Belongs to the peptidase A8 family.

It localises to the cell inner membrane. It carries out the reaction Release of signal peptides from bacterial membrane prolipoproteins. Hydrolyzes -Xaa-Yaa-Zaa-|-(S,diacylglyceryl)Cys-, in which Xaa is hydrophobic (preferably Leu), and Yaa (Ala or Ser) and Zaa (Gly or Ala) have small, neutral side chains.. The protein operates within protein modification; lipoprotein biosynthesis (signal peptide cleavage). In terms of biological role, this protein specifically catalyzes the removal of signal peptides from prolipoproteins. The polypeptide is Lipoprotein signal peptidase (Teredinibacter turnerae (strain ATCC 39867 / T7901)).